Reading from the N-terminus, the 385-residue chain is Multidrug resistance protein MdtE (385 aa).

Positions 1 to 20 (MNRRRKLLIPLLFCGAMLTA) are cleaved as a signal peptide. Cysteine 21 carries the N-palmitoyl cysteine lipid modification. Residue cysteine 21 is the site of S-diacylglycerol cysteine attachment.

This sequence belongs to the membrane fusion protein (MFP) (TC 8.A.1) family. Homotrimer. Part of the tripartite efflux system MdtEF-TolC, which is composed of an inner membrane transporter, MdtF, a membrane fusion protein, MdtE, and an outer membrane component, TolC. The complex forms a large protein conduit and can translocate molecules across both the inner and outer membranes.

Its subcellular location is the cell inner membrane. Its function is as follows. Part of the tripartite efflux system MdtEF-TolC, which confers resistance to compounds such as rhodamine 6G, erythromycin, doxorubicin, ethidium bromide, TPP, SDS, deoxycholate, crystal violet and benzalkonium. In Escherichia coli (strain K12), this protein is Multidrug resistance protein MdtE (mdtE).